Consider the following 285-residue polypeptide: NAC domain-containing protein 92 (285 aa).

Positions 20–170 constitute an NAC domain; that stretch reads LPPGFRFHPT…EWVICRVFQK (151 aa). Residues 117-176 mediate DNA binding; that stretch reads VGMKKTLVFYKGRAPKGVKTNWVMHEYRLEGKYCIENLPQTAKNEWVICRVFQKRADGTK.

As to quaternary structure, forms homodimers. Interacts with GLK1 and GLK2. Interacts with NLA. Post-translationally, ubiquitinated by NLA. Ubiquitination of NAC92 leads to its degradation by the proteasome during leaf senescence under nitrogen deficiency. In terms of tissue distribution, mostly expressed in roots and flowers, and, to a lower extent, in shoots and leaves. Particularly expressed in old and senescing tissues.

The protein localises to the nucleus. In terms of biological role, transcription activator that binds to DNA in promoters of target genes on a specific bipartite motif 5'-[ACG][CA]GT[AG](5-6n)[CT]AC[AG]-3'. Promotes lateral root development. Triggers the expression of senescence-associated genes during age-, salt- and dark-induced senescence through a regulatory network that may involve cross-talk with salt- and H(2)O(2)-dependent signaling pathways. Also regulates genes during seed germination. Positively regulates aging-induced cell death. Involved in age-related resistance (ARR) against Pseudomonas syringae pv. tomato and Hyaloperonospora arabidopsidis. Antagonizes GLK1 and GLK2 transcriptional activity, shifting the balance from chloroplast maintenance towards deterioration during leaf senescence. Promotes the expression of senescence-associated genes, including ENDO1/BFN1, SWEET15/SAG29 and SINA1/At3g13672, during senescence onset. This chain is NAC domain-containing protein 92, found in Arabidopsis thaliana (Mouse-ear cress).